Consider the following 835-residue polypeptide: Ribonucleoside-diphosphate reductase large subunit (835 aa).

The interval 1-39 (MPPRAPRPAGAVSPPFPPLAGPPLKARAPRARDSPLTSP) is disordered. Substrate-binding positions include T262, 277-278 (SC), G308, 489-493 (NLCTE), and 666-670 (PTVSS). Residues C278 and C506 are joined by a disulfide bond. N489 serves as the catalytic Proton acceptor. The active-site Cysteine radical intermediate is the C491. The Proton acceptor role is filled by E493.

Belongs to the ribonucleoside diphosphate reductase large chain family. Heterotetramer composed of a homodimer of the large subunit (R1) and a homodimer of the small subunit (R2). Larger multisubunit protein complex are also active, composed of (R1)n(R2)n.

It catalyses the reaction a 2'-deoxyribonucleoside 5'-diphosphate + [thioredoxin]-disulfide + H2O = a ribonucleoside 5'-diphosphate + [thioredoxin]-dithiol. Functionally, ribonucleoside-diphosphate reductase holoenzyme provides the precursors necessary for viral DNA synthesis. Allows virus growth in non-dividing cells, as well as reactivation from latency in infected hosts. Catalyzes the biosynthesis of deoxyribonucleotides from the corresponding ribonucleotides. This Suid herpesvirus 1 (strain Kaplan) (SuHV-1) protein is Ribonucleoside-diphosphate reductase large subunit.